We begin with the raw amino-acid sequence, 98 residues long: Large ribosomal subunit protein eL21 (98 aa).

The segment at 1–23 (MVDRKGKGFRRKTRDKLSKHPRQ) is disordered. Residues 7–23 (KGFRRKTRDKLSKHPRQ) are compositionally biased toward basic residues.

The protein belongs to the eukaryotic ribosomal protein eL21 family.

In Nanoarchaeum equitans (strain Kin4-M), this protein is Large ribosomal subunit protein eL21.